A 275-amino-acid polypeptide reads, in one-letter code: Ribosomal protein L11 methyltransferase (275 aa).

Residues threonine 130, glycine 151, aspartate 172, and asparagine 213 each coordinate S-adenosyl-L-methionine.

It belongs to the methyltransferase superfamily. PrmA family.

The protein resides in the cytoplasm. The catalysed reaction is L-lysyl-[protein] + 3 S-adenosyl-L-methionine = N(6),N(6),N(6)-trimethyl-L-lysyl-[protein] + 3 S-adenosyl-L-homocysteine + 3 H(+). Its function is as follows. Methylates ribosomal protein L11. This chain is Ribosomal protein L11 methyltransferase, found in Wolinella succinogenes (strain ATCC 29543 / DSM 1740 / CCUG 13145 / JCM 31913 / LMG 7466 / NCTC 11488 / FDC 602W) (Vibrio succinogenes).